The following is a 750-amino-acid chain: Polyribonucleotide nucleotidyltransferase (750 aa).

Residues aspartate 519 and aspartate 525 each contribute to the Mg(2+) site. The KH domain occupies 585 to 644 (PRVIAVKIPVDKIGEVIGPKGKMINQIQEDTGADISIEDDGTVYIGATNGPSADAARSAI). In terms of domain architecture, S1 motif spans 656–728 (GERYLGTVVK…DRGKLSLSPV (73 aa)). Positions 725–750 (LSPVVAEEEGAASEDAPAEAAEESAE) are disordered. The span at 730–750 (AEEEGAASEDAPAEAAEESAE) shows a compositional bias: acidic residues.

It belongs to the polyribonucleotide nucleotidyltransferase family. Mg(2+) is required as a cofactor.

The protein localises to the cytoplasm. It catalyses the reaction RNA(n+1) + phosphate = RNA(n) + a ribonucleoside 5'-diphosphate. Its function is as follows. Involved in mRNA degradation. Catalyzes the phosphorolysis of single-stranded polyribonucleotides processively in the 3'- to 5'-direction. This is Polyribonucleotide nucleotidyltransferase from Paenarthrobacter aurescens (strain TC1).